The primary structure comprises 373 residues: MVSARLRKTDLVVDLKALGANVQRQREQLAPGSRILAVVKANAYGNGMVPVASALARAGVEGFCVALLDEAIELRDSGIQELVLVLGITPVEYAPLAAAQGISLTVGSLEWLKNYQRLAKEEGIKQPLKVHLALDTGMGRIGFTTPEDFKEALQLVAAPCFEFEGIFTHFATADEEDATYFERQRARFDDFMAVVTKRPPFVHVANSATGLWHQKSIVANTIRMGISMYGANPSGVGIKESFPLEPVTSLVTHATYVKQLKAGESVSYGATYTAKEDEWVATLPVGYADGYPRRMQGFYVLVDGQRCEVLGRVCMDQMMVRLPKEYPVGTEAVLMGRSLDQEITVTDVAEYAHTINYEILTGMGARLHRRYLG.

The active-site Proton acceptor; specific for D-alanine is the lysine 40. Lysine 40 is modified (N6-(pyridoxal phosphate)lysine). Position 140 (arginine 140) interacts with substrate. Tyrosine 268 acts as the Proton acceptor; specific for L-alanine in catalysis. Methionine 315 is a binding site for substrate.

It belongs to the alanine racemase family. The cofactor is pyridoxal 5'-phosphate.

It catalyses the reaction L-alanine = D-alanine. Its pathway is amino-acid biosynthesis; D-alanine biosynthesis; D-alanine from L-alanine: step 1/1. In terms of biological role, catalyzes the interconversion of L-alanine and D-alanine. May also act on other amino acids. This is Alanine racemase (alr) from Limosilactobacillus fermentum (strain NBRC 3956 / LMG 18251) (Lactobacillus fermentum).